The primary structure comprises 279 residues: Movement protein (279 aa).

The protein belongs to the cucumovirus movement protein family.

It is found in the host cell junction. The protein localises to the host plasmodesma. Its function is as follows. Transports viral genome to neighboring plant cells directly through plasmosdesmata, without any budding. The movement protein allows efficient cell to cell propagation, by bypassing the host cell wall barrier. Acts by forming a tubular structure at the host plasmodesmata, enlarging it enough to allow free passage of virion capsids. In Cucumber mosaic virus (strain As) (CMV), this protein is Movement protein.